An 89-amino-acid chain; its full sequence is Otospiralin (89 aa).

The N-terminal stretch at 1–21 (MQPCVLWWLALGLLLGIPAGA) is a signal peptide.

This sequence belongs to the otospiralin family. As to expression, ear specific. Expressed in the cochlea and vestibule, but not in the cochlear nerve, cochlear nucleus, spinal chord, muscle, cerebral cortex, cerebellum, diencephalon and olfactory bulb. In the cochlea, expressed in fibrocytes of the spiral limbus, spiral ligament and suprastrial zone. In the vestibule, expressed in cells located to the stroma below the macular and crista sensory epithelia and in the subepithelial layer of the walls of semicircular canals and maculae.

The protein localises to the secreted. Its function is as follows. May be essential for the survival of the neurosensory epithelium of the inner ear. The protein is Otospiralin (Otos) of Rattus norvegicus (Rat).